Reading from the N-terminus, the 471-residue chain is Pneumolysin (471 aa).

4 beta stranded membrane passes run 158–171, 178–187, 256–265, and 273–285; these read MEQLKVKFGSDFEK, IDFNSVHSGE, SDEVEAAFEA, and APQTEWKQILDNT. The Conserved undecapeptide motif lies at 427 to 437; sequence ECTGLAWEWWR. The short motif at 459–460 is the Cholesterol binding element; sequence TL.

The protein belongs to the cholesterol-dependent cytolysin family. In terms of assembly, elongated monomers align along their lengths, indicating intersubunit contacts and suggesting the prepore structure. Modeling based on cryo-EM shows a homooligomeric pore complex containing 38-44 subunits; when inserted in the host membrane. The size of isolated pores is detergent-dependent; in amphipol A8-35 homogenous rings form with 42 subunits.

It is found in the secreted. The protein localises to the host cell membrane. With respect to regulation, erythrocytes hemolysis is inhibited by cholesterol. In terms of biological role, a cholesterol-dependent toxin that causes cytolysis by forming pores in cholesterol-containing host membranes. After binding to target membranes, the protein undergoes a major conformation change, leading to its insertion in the host membrane and formation of an oligomeric pore complex. Cholesterol is required for binding to host membranes, membrane insertion and pore formation; cholesterol binding is mediated by a Thr-Leu pair in the C-terminus. Can be reversibly inactivated by oxidation. The protein is Pneumolysin (ply) of Streptococcus pneumoniae serotype 2 (strain D39 / NCTC 7466).